The chain runs to 337 residues: Glucokinase (337 aa).

11–16 is a binding site for ATP; it reads ADIGGT.

It belongs to the bacterial glucokinase family.

It is found in the cytoplasm. It carries out the reaction D-glucose + ATP = D-glucose 6-phosphate + ADP + H(+). The sequence is that of Glucokinase from Xylella fastidiosa (strain M12).